A 475-amino-acid chain; its full sequence is Probable proline--tRNA ligase, mitochondrial (475 aa).

The N-terminal 29 residues, 1-29 (MEGLLTRCRTLSALAACSLRHCRYIIHKC), are a transit peptide targeting the mitochondrion.

The protein belongs to the class-II aminoacyl-tRNA synthetase family.

It localises to the mitochondrion matrix. It catalyses the reaction tRNA(Pro) + L-proline + ATP = L-prolyl-tRNA(Pro) + AMP + diphosphate. In terms of biological role, mitochondrial aminoacyl-tRNA synthetase that catalyzes the specific attachment of the proline amino acid (aa) to the homologous transfer RNA (tRNA), further participating in protein synthesis. The reaction occurs in a two steps: proline is first activated by ATP to form Pro-AMP and then transferred to the acceptor end of tRNA(Pro). The polypeptide is Probable proline--tRNA ligase, mitochondrial (Pars2) (Mus musculus (Mouse)).